Consider the following 144-residue polypeptide: Toxin MT0934 (144 aa).

Toxic component of a type II toxin-antitoxin (TA) system. Its toxic effect is neutralized by coexpression with cognate antitoxin MT0933. The polypeptide is Toxin MT0934 (Mycobacterium tuberculosis (strain CDC 1551 / Oshkosh)).